The following is a 330-amino-acid chain: MEAPKFVNNACPIPNLNLSRTEEIELDFPPLQIQQKIATILDTFTELSAELSAELSAELSAELSAELSAELSAELSAELSAELSAELSAELSAELSAELSAELSAELSAELRERKKQYAFYRDYLLNQENIRKIYGANIPFETFQVKDICEIRRGRAITKAYIRNNPGENPVYSAATTNDGELGRIKDCDFDGEYITWTTNGYAGVVFYRNGKFNASQDCGVLKVKNKKICTKFLSFLLKIEAPKFVHNLASRPKLSQKVMAEIELSFPPLEIQEKIADILFAFEKLCNDLVEGIPAEIELRKKQLDYYQNFLFNWVQEQKKNSLSTNLN.

Belongs to the type-I restriction system S methylase family. As to quaternary structure, the methyltransferase is composed of M and S polypeptides.

Functionally, the specificity (S) subunit of a type I restriction enzyme; this subunit dictates DNA sequence specificity. The M and S subunits together form a methyltransferase (MTase) that probably methylates A-2 on the top strand and A-3 on the bottom strand of the sequence 5'-GAN(7)TAY-3'. As the bacterial DNA is methylated on this sequence and this is the only type I methylase in the genome, it is probably responsible for all of the methylation on this site in the genome. The R subunit has multiple frameshifts and is probably not expressed in this bacteria. The polypeptide is Type I restriction enzyme MpnII specificity subunit (Mycoplasma pneumoniae (strain ATCC 29342 / M129 / Subtype 1) (Mycoplasmoides pneumoniae)).